The chain runs to 242 residues: AA9 family lytic polysaccharide monooxygenase F (242 aa).

Positions Met-1 to Ala-20 are cleaved as a signal peptide. A Cu(2+)-binding site is contributed by His-21. The segment at Gly-31–Asn-53 is disordered. Intrachain disulfides connect Cys-71-Cys-192 and Cys-112-Cys-116. His-101 contacts Cu(2+). His-178 and Gln-187 together coordinate O2. A Cu(2+)-binding site is contributed by Tyr-189.

The protein belongs to the polysaccharide monooxygenase AA9 family. Requires Cu(2+) as cofactor.

It localises to the secreted. It carries out the reaction [(1-&gt;4)-beta-D-glucosyl]n+m + reduced acceptor + O2 = 4-dehydro-beta-D-glucosyl-[(1-&gt;4)-beta-D-glucosyl]n-1 + [(1-&gt;4)-beta-D-glucosyl]m + acceptor + H2O.. Lytic polysaccharide monooxygenase (LPMO) that depolymerizes crystalline and amorphous polysaccharides via the oxidation of scissile alpha- or beta-(1-4)-glycosidic bonds, yielding C1 or C4 oxidation products. Catalysis by LPMOs requires the reduction of the active-site copper from Cu(II) to Cu(I) by a reducing agent and H(2)O(2) or O(2) as a cosubstrate. Active on hemicelluloses, including xylan, glucomannan, and xyloglucan. Shows clear activity on cellooligosaccharides, generating C4 oxidation products. Has no activity on ivory nut mannan (INM), a linear beta-1,4-linked mannan without substitutions. This Malbranchea cinnamomea (Thermophilic fungus) protein is AA9 family lytic polysaccharide monooxygenase F.